The primary structure comprises 627 residues: MTELLFNKRLQVLVKSKDTDERRSVIRVSIELQLPSSPVHRKDLVVRLTDDTDLYFLYNLIISEEDFQSLKVQQGLLIDFTSFPQKFIDLLEQCICEQDKESPRFLLQLSSSSSAFDHSPSNLNIVETNAFKHLTHLSLKLLPGSDTDIKKYLASCLSSVKEEKQQLQQKLRKTEEDLTRQLNYAQQTLSEKSRELDKLRSEWTSQTTSLSSRHMQDLTAEREKALETQSRLQQQNEQLRQELESSHHRSTQQLQTKVSELETANRELIDKKYKSDSTIRDLKAKLTSLEEECQRSKQQVLSLRRENSALDSECHEKERLLNQLQTRVAVLEQEIKDKDQLVLRTKEVLEATQQQKNSVEGNAESKQLQISKLESTVKSLSEELIKANGIIKKLQADLKALLGKIKVKNSVTVPQEKILQETSDKLQRQQRELQDTQQRLSLKEEEAAKLKEQLEATVQKLDESREVLKTNENVITWLNKQLNENQLSRKQETVAMFETPAAALRSAAVPHNMAFPITSTINSKYPLALSCVSSGSRSVLTSSNGPKVQFNPMSVKPSAAEVSPAAFSQPANKENSEPVGLDSKYFERRDDSIPLRGLLPSMHLNREVPKPLNTAAAKATPSAFFPG.

The PISA domain occupies 39-91 (VHRKDLVVRLTDDTDLYFLYNLIISEEDFQSLKVQQGLLIDFTSFPQKFIDLL). The stretch at 153-473 (LASCLSSVKE…SREVLKTNEN (321 aa)) forms a coiled coil. 2 disordered regions span residues 187–257 (QTLS…LQTK) and 561–586 (EVSPAAFSQPANKENSEPVGLDSKYF). Over residues 191-201 (EKSRELDKLRS) the composition is skewed to basic and acidic residues. Residues 202 to 213 (EWTSQTTSLSSR) are compositionally biased toward polar residues. Residues 214–226 (HMQDLTAEREKAL) are compositionally biased toward basic and acidic residues. Low complexity predominate over residues 229–238 (QSRLQQQNEQ).

As to quaternary structure, nine homodimers form a cartwheel structure with an internal diameter of 23 nM and radial spokes connecting to the microtubule triplets.

It is found in the cytoplasm. Its subcellular location is the cytoskeleton. The protein resides in the microtubule organizing center. It localises to the centrosome. Functionally, central scaffolding component of the centrioles ensuring their 9-fold symmetry. Required for centrosome biogenesis and duplication: required both for mother-centriole-dependent centriole duplication and deuterosome-dependent centriole amplification in multiciliated cells. This is Spindle assembly abnormal protein 6 homolog (sass6) from Danio rerio (Zebrafish).